Reading from the N-terminus, the 161-residue chain is RNA pyrophosphohydrolase (161 aa).

The Nudix hydrolase domain occupies 6–149 (GYRPNVGIIL…KREVYRRAMR (144 aa)). The Nudix box signature appears at 38–59 (GGIKKDESPEEALFRELKEEVG).

The protein belongs to the Nudix hydrolase family. RppH subfamily. A divalent metal cation is required as a cofactor.

Functionally, accelerates the degradation of transcripts by removing pyrophosphate from the 5'-end of triphosphorylated RNA, leading to a more labile monophosphorylated state that can stimulate subsequent ribonuclease cleavage. In Hahella chejuensis (strain KCTC 2396), this protein is RNA pyrophosphohydrolase.